Here is a 527-residue protein sequence, read N- to C-terminus: MRRRRRRDGFYPAPDFRDREAEDMAGVFDIDLDQPEDAGSEDELEEGGQLNESMDHGGVGPYELGMEHCEKFEISETSVNRGPEKIRPECFELLRVLGKGGYGKVFQVRKVTGANTGKIFAMKVLKKAMIVRNAKDTAHTKAERNILEEVKHPFIVDLIYAFQTGGKLYLILEYLSGGELFMQLEREGIFMEDTACFYLAEISMALGHLHQKGIIYRDLKPENIMLNHQGHVKLTDFGLCKESIHDGTVTHTFCGTIEYMAPEILMRSGHNRAVDWWSLGALMYDMLTGAPPFTGENRKKTIDKILKCKLNLPPYLTQEARDLLKKLLKRNAASRLGAGPGDAGEVQAHPFFRHINWEELLARKVEPPFKPLLQSEEDVSQFDSKFTRQTPVDSPDDSALSESANQVFLGFTYVAPSVLESVKEKFSFEPKIRSPRRFIGSPRTPVSPVKFSPGDFWGRGASASTANPQTPVEYPMETSGIEQMDVTMSGEASAPLPIRQPNSGPYKKQAFPMISKRPEHLRMNLEL.

Residues methionine 1–methionine 54 are disordered. Positions phenylalanine 28–leucine 32 match the TOS motif motif. The segment covering isoleucine 30–glutamate 46 has biased composition (acidic residues). A Protein kinase domain is found at phenylalanine 91–phenylalanine 352. ATP contacts are provided by residues leucine 97–valine 105 and lysine 123. Aspartate 218 acts as the Proton acceptor in catalysis. A Phosphothreonine; by PDPK1 modification is found at threonine 252. Positions arginine 353 to lysine 423 constitute an AGC-kinase C-terminal domain. Serine 394 bears the Phosphoserine mark. Threonine 412 is subject to Phosphothreonine; by MTOR, NEK6 and NEK7. An autoinhibitory domain region spans residues glutamate 424–leucine 527. Phosphoserine is present on residues serine 434 and serine 441. Position 444 is a phosphothreonine (threonine 444). A phosphoserine mark is found at serine 447 and serine 452. N6-acetyllysine is present on lysine 516.

Belongs to the protein kinase superfamily. AGC Ser/Thr protein kinase family. S6 kinase subfamily. In terms of assembly, interacts with PPP1R9A/neurabin-1. Interacts with RPTOR. Interacts with IRS1. Interacts with EIF3B and EIF3C. Interacts with TRAF4. Interacts with POLDIP3. Interacts (via N-terminus) with IER5. Post-translationally, phosphorylation at Thr-412 is regulated by mTORC1. The phosphorylation at this site is maintained by an agonist-dependent autophosphorylation mechanism. Activated by phosphorylation at Thr-252 by PDPK1. Dephosphorylation by PPP1CC at Thr-412 in mitochondrion.

The protein localises to the cytoplasm. It is found in the synapse. Its subcellular location is the synaptosome. The protein resides in the mitochondrion outer membrane. It localises to the mitochondrion. It catalyses the reaction L-seryl-[protein] + ATP = O-phospho-L-seryl-[protein] + ADP + H(+). It carries out the reaction L-threonyl-[protein] + ATP = O-phospho-L-threonyl-[protein] + ADP + H(+). Its activity is regulated as follows. Inactivated by binding to URI1. Activation requires multiple phosphorylation events on serine/threonine residues. Activation appears to be first mediated by phosphorylation of multiple sites in the autoinhibitory domain, which facilitates phosphorylation at Thr-412, disrupting the autoinhibitory mechanism and allowing phosphorylation of Thr-252 by PDPK1. The active conformation of the kinase is believed to be stabilized by a mechanism involving three conserved phosphorylation sites located in the kinase domain activation loop (Thr-252) and in the AGC-kinase C-terminal domain (Ser-394 in the middle of the tail/linker region and Thr-412 within a hydrophobic motif at its end). Activated by mTORC1; isoform Alpha I and isoform Alpha II are sensitive to rapamycin, which inhibits activating phosphorylation at Thr-412. Activated by PDPK1. Functionally, serine/threonine-protein kinase that acts downstream of mTOR signaling in response to growth factors and nutrients to promote cell proliferation, cell growth and cell cycle progression. Regulates protein synthesis through phosphorylation of EIF4B, RPS6 and EEF2K, and contributes to cell survival by repressing the pro-apoptotic function of BAD. Under conditions of nutrient depletion, the inactive form associates with the EIF3 translation initiation complex. Upon mitogenic stimulation, phosphorylation by the mechanistic target of rapamycin complex 1 (mTORC1) leads to dissociation from the EIF3 complex and activation. The active form then phosphorylates and activates several substrates in the pre-initiation complex, including the EIF2B complex and the cap-binding complex component EIF4B. Also controls translation initiation by phosphorylating a negative regulator of EIF4A, PDCD4, targeting it for ubiquitination and subsequent proteolysis. Promotes initiation of the pioneer round of protein synthesis by phosphorylating POLDIP3/SKAR. In response to IGF1, activates translation elongation by phosphorylating EEF2 kinase (EEF2K), which leads to its inhibition and thus activation of EEF2. Also plays a role in feedback regulation of mTORC2 by mTORC1 by phosphorylating MAPKAP1/SIN1, MTOR and RICTOR, resulting in the inhibition of mTORC2 and AKT1 signaling. Also involved in feedback regulation of mTORC1 and mTORC2 by phosphorylating DEPTOR. Mediates cell survival by phosphorylating the pro-apoptotic protein BAD and suppressing its pro-apoptotic function. Phosphorylates mitochondrial URI1 leading to dissociation of a URI1-PPP1CC complex. The free mitochondrial PPP1CC can then dephosphorylate RPS6KB1 at Thr-412, which is proposed to be a negative feedback mechanism for the RPS6KB1 anti-apoptotic function. Mediates TNF-alpha-induced insulin resistance by phosphorylating IRS1 at multiple serine residues, resulting in accelerated degradation of IRS1. In cells lacking functional TSC1-2 complex, constitutively phosphorylates and inhibits GSK3B. May be involved in cytoskeletal rearrangement through binding to neurabin. Phosphorylates and activates the pyrimidine biosynthesis enzyme CAD, downstream of MTOR. Following activation by mTORC1, phosphorylates EPRS and thereby plays a key role in fatty acid uptake by adipocytes and also most probably in interferon-gamma-induced translation inhibition. The chain is Ribosomal protein S6 kinase beta-1 (RPS6KB1) from Bos taurus (Bovine).